A 483-amino-acid chain; its full sequence is Glycogen synthase kinase-3 alpha (483 aa).

Positions 1–15 are enriched in gly residues; it reads MSGGGPSGGGPGGSG. Residues 1-96 are disordered; it reads MSGGGPSGGG…PPPGVKLGRD (96 aa). Serine 2 is modified (N-acetylserine). At serine 2 the chain carries Phosphoserine. Residue serine 21 is modified to Phosphoserine; by PKB/AKT1. Gly residues predominate over residues 25–82; the sequence is PGGGGGGGGGGPGGSASGPGGTGGGKASVGAMGGGVGASSSGGGPSGSGGGGSGGPGA. 3 positions are modified to phosphoserine: serine 72, serine 77, and serine 97. Residues 119–403 enclose the Protein kinase domain; it reads YTDIKVIGNG…PLEACAHSFF (285 aa). Residues 125–133 and lysine 148 contribute to the ATP site; that span reads IGNGSFGVV. Catalysis depends on aspartate 244, which acts as the Proton acceptor. A Phosphotyrosine modification is found at tyrosine 279. Positions 443–483 are disordered; that stretch reads PHLRSPSGPATLTSSSQALTETQTGQDWQAPDATPTLTNSS. Polar residues predominate over residues 450-469; that stretch reads GPATLTSSSQALTETQTGQD.

This sequence belongs to the protein kinase superfamily. CMGC Ser/Thr protein kinase family. GSK-3 subfamily. In terms of assembly, monomer. Interacts with ARRB2, AXIN1 and CTNNB1/beta-catenin. Interacts with CTNND2. Interacts with LMBR1L. Interacts with DDX3X. Interacts with TNFRSF10B. In terms of processing, phosphorylated by AKT1 at Ser-21: upon insulin-mediated signaling, the activated PKB/AKT1 protein kinase phosphorylates and deactivates GSK3A, resulting in the dephosphorylation and activation of GYS1. Activated by phosphorylation at Tyr-279.

The catalysed reaction is L-seryl-[tau protein] + ATP = O-phospho-L-seryl-[tau protein] + ADP + H(+). It catalyses the reaction L-threonyl-[tau protein] + ATP = O-phospho-L-threonyl-[tau protein] + ADP + H(+). The enzyme catalyses L-seryl-[protein] + ATP = O-phospho-L-seryl-[protein] + ADP + H(+). It carries out the reaction L-threonyl-[protein] + ATP = O-phospho-L-threonyl-[protein] + ADP + H(+). Its activity is regulated as follows. Activated by phosphorylation at Tyr-279. In response to insulin, inhibited by phosphorylation at Ser-21 by PKB/AKT1; phosphorylation at this site causes a conformational change, preventing access of substrates to the active site. Inhibited by lithium. Its function is as follows. Constitutively active protein kinase that acts as a negative regulator in the hormonal control of glucose homeostasis, Wnt signaling and regulation of transcription factors and microtubules, by phosphorylating and inactivating glycogen synthase (GYS1 or GYS2), CTNNB1/beta-catenin, APC and AXIN1. Requires primed phosphorylation of the majority of its substrates. Contributes to insulin regulation of glycogen synthesis by phosphorylating and inhibiting GYS1 activity and hence glycogen synthesis. Regulates glycogen metabolism in liver, but not in muscle. May also mediate the development of insulin resistance by regulating activation of transcription factors. In Wnt signaling, regulates the level and transcriptional activity of nuclear CTNNB1/beta-catenin. Facilitates amyloid precursor protein (APP) processing and the generation of APP-derived amyloid plaques found in Alzheimer disease. May be involved in the regulation of replication in pancreatic beta-cells. Is necessary for the establishment of neuronal polarity and axon outgrowth. Through phosphorylation of the anti-apoptotic protein MCL1, may control cell apoptosis in response to growth factors deprivation. Acts as a regulator of autophagy by mediating phosphorylation of KAT5/TIP60 under starvation conditions, activating KAT5/TIP60 acetyltransferase activity and promoting acetylation of key autophagy regulators, such as ULK1 and RUBCNL/Pacer. Negatively regulates extrinsic apoptotic signaling pathway via death domain receptors. Promotes the formation of an anti-apoptotic complex, made of DDX3X, BRIC2 and GSK3B, at death receptors, including TNFRSF10B. The anti-apoptotic function is most effective with weak apoptotic signals and can be overcome by stronger stimulation. This Rattus norvegicus (Rat) protein is Glycogen synthase kinase-3 alpha (Gsk3a).